Here is a 524-residue protein sequence, read N- to C-terminus: Alkaline phosphatase, tissue-nonspecific isozyme (524 aa).

The signal sequence occupies residues 1-17; that stretch reads MISPFLVLAIGTCLTNS. Asp-60 provides a ligand contact to Mg(2+). The Zn(2+) site is built by Asp-60 and Ser-110. Ser-110 (phosphoserine intermediate) is an active-site residue. Residue Ser-110 is modified to Phosphoserine. An intrachain disulfide couples Cys-139 to Cys-201. Residue Asn-140 is glycosylated (N-linked (GlcNAc...) asparagine). Thr-173 is a Mg(2+) binding site. Asn-230 carries N-linked (GlcNAc...) asparagine glycosylation. Glu-235 contacts Ca(2+). N-linked (GlcNAc...) asparagine glycosylation occurs at Asn-271. Residues Phe-290 and Glu-291 each contribute to the Ca(2+) site. Asn-303 carries an N-linked (GlcNAc...) asparagine glycan. Ca(2+) is bound at residue Asp-306. Glu-332 contacts Mg(2+). Zn(2+)-binding residues include Asp-337, His-341, Asp-378, and His-379. An N-linked (GlcNAc...) asparagine glycan is attached at Asn-430. Residue His-454 participates in Zn(2+) binding. The cysteines at positions 489 and 497 are disulfide-linked. The GPI-anchor amidated serine moiety is linked to residue Ser-501. Residues 502–524 constitute a propeptide, removed in mature form; sequence SAGSLAAGPLLLALALYPLSVLF.

This sequence belongs to the alkaline phosphatase family. As to quaternary structure, homodimer. Mg(2+) serves as cofactor. Requires Zn(2+) as cofactor. Ca(2+) is required as a cofactor. In terms of processing, N-glycosylated.

Its subcellular location is the cell membrane. It is found in the extracellular vesicle membrane. It localises to the mitochondrion membrane. The protein localises to the mitochondrion intermembrane space. It carries out the reaction a phosphate monoester + H2O = an alcohol + phosphate. The catalysed reaction is diphosphate + H2O = 2 phosphate + H(+). The enzyme catalyses pyridoxal 5'-phosphate + H2O = pyridoxal + phosphate. It catalyses the reaction phosphoethanolamine + H2O = ethanolamine + phosphate. It carries out the reaction N-phosphocreatine + H2O = creatine + phosphate. The catalysed reaction is ATP + H2O = ADP + phosphate + H(+). The enzyme catalyses ADP + H2O = AMP + phosphate + H(+). It catalyses the reaction AMP + H2O = adenosine + phosphate. Its activity is regulated as follows. Phosphatase activity is specifically inhibited by 5-((5-chloro-2-methoxyphenyl)sulfonamido)nicotinamide (SBI-425). Alkaline phosphatase that metabolizes various phosphate compounds and plays a key role in skeletal mineralization and adaptive thermogenesis. Has broad substrate specificity and can hydrolyze a considerable variety of compounds: however, only a few substrates, such as diphosphate (inorganic pyrophosphate; PPi), pyridoxal 5'-phosphate (PLP) and N-phosphocreatine are natural substrates. Plays an essential role in skeletal and dental mineralization via its ability to hydrolyze extracellular diphosphate, a potent mineralization inhibitor, to phosphate: it thereby promotes hydroxyapatite crystal formation and increases inorganic phosphate concentration. Acts in a non-redundant manner with PHOSPHO1 in skeletal mineralization: while PHOSPHO1 mediates the initiation of hydroxyapatite crystallization in the matrix vesicles (MVs), ALPL/TNAP catalyzes the spread of hydroxyapatite crystallization in the extracellular matrix. Also promotes dephosphorylation of osteopontin (SSP1), an inhibitor of hydroxyapatite crystallization in its phosphorylated state; it is however unclear whether ALPL/TNAP mediates SSP1 dephosphorylation via a direct or indirect manner. Catalyzes dephosphorylation of PLP to pyridoxal (PL), the transportable form of vitamin B6, in order to provide a sufficient amount of PLP in the brain, an essential cofactor for enzymes catalyzing the synthesis of diverse neurotransmitters. Additionally, also able to mediate ATP degradation in a stepwise manner to adenosine, thereby regulating the availability of ligands for purinergic receptors. Also capable of dephosphorylating microbial products, such as lipopolysaccharides (LPS) as well as other phosphorylated small-molecules, such as poly-inosine:cytosine (poly I:C). Acts as a key regulator of adaptive thermogenesis as part of the futile creatine cycle: localizes to the mitochondria of thermogenic fat cells and acts by mediating hydrolysis of N-phosphocreatine to initiate a futile cycle of creatine dephosphorylation and phosphorylation. During the futile creatine cycle, creatine and N-phosphocreatine are in a futile cycle, which dissipates the high energy charge of N-phosphocreatine as heat without performing any mechanical or chemical work. The protein is Alkaline phosphatase, tissue-nonspecific isozyme of Homo sapiens (Human).